A 563-amino-acid polypeptide reads, in one-letter code: Membrane protein insertase YidC (563 aa).

The helical transmembrane segment at 6–26 (TILWMIFSFSLLLLWNNWQIH) threads the bilayer. A disordered region spans residues 36–68 (PPASSAASPAEGQQAAANGQAATPSVPTTPAAA). The next 4 membrane-spanning stretches (helical) occupy residues 373-393 (WGWA…PLAA), 443-463 (LPMV…LASV), 482-502 (PYFI…KLNP), and 512-532 (VMMI…AGLV).

It belongs to the OXA1/ALB3/YidC family. Type 1 subfamily. In terms of assembly, interacts with the Sec translocase complex via SecD. Specifically interacts with transmembrane segments of nascent integral membrane proteins during membrane integration.

Its subcellular location is the cell inner membrane. Required for the insertion and/or proper folding and/or complex formation of integral membrane proteins into the membrane. Involved in integration of membrane proteins that insert both dependently and independently of the Sec translocase complex, as well as at least some lipoproteins. Aids folding of multispanning membrane proteins. The polypeptide is Membrane protein insertase YidC (Bordetella petrii (strain ATCC BAA-461 / DSM 12804 / CCUG 43448)).